Here is a 295-residue protein sequence, read N- to C-terminus: Deleted in azoospermia-like (295 aa).

A compositionally biased stretch (polar residues) spans 1-10 (MSAANPETPN). Positions 1-25 (MSAANPETPNSTISREASTQSSSAA) are disordered. The segment covering 11-25 (STISREASTQSSSAA) has biased composition (low complexity). The 76-residue stretch at 40–115 (NTVFVGGIDV…KKLKLGPAIR (76 aa)) folds into the RRM domain. The interval 80 to 132 (KGYGFVSFFNDVDVQKIVESQINFHGKKLKLGPAIRKQNLCAYHVQPRPLVFN) is homodimerization. Residues 167 to 190 (AYPTYPNSPVQVITGYQLPVYNYQ) enclose the DAZ domain. Position 276 is a phosphotyrosine (tyrosine 276).

Belongs to the RRM DAZ family. As to quaternary structure, homodimer and heterodimer. Forms a heterodimer with DAZ. Interacts with BOLL, DAZAP1 and DAZAP2. Interacts with PUM2 Multiple DAZL RRMs can bind to a single RNA containing multiple GUU triplets. In terms of tissue distribution, testis specific.

It is found in the cytoplasm. The protein resides in the nucleus. Its function is as follows. RNA-binding protein, which is essential for gametogenesis in both males and females. Plays a central role during spermatogenesis. Acts by binding to the 3'-UTR of mRNA, specifically recognizing GUU triplets, and thereby regulating the translation of key transcripts. This is Deleted in azoospermia-like (DAZL) from Macaca fascicularis (Crab-eating macaque).